Here is a 437-residue protein sequence, read N- to C-terminus: Trigger factor (437 aa).

The PPIase FKBP-type domain maps to 161–246 (GDRVNIDFKG…VNKVEGKALP (86 aa)).

This sequence belongs to the FKBP-type PPIase family. Tig subfamily.

The protein resides in the cytoplasm. The catalysed reaction is [protein]-peptidylproline (omega=180) = [protein]-peptidylproline (omega=0). Its function is as follows. Involved in protein export. Acts as a chaperone by maintaining the newly synthesized protein in an open conformation. Functions as a peptidyl-prolyl cis-trans isomerase. This Alcanivorax borkumensis (strain ATCC 700651 / DSM 11573 / NCIMB 13689 / SK2) protein is Trigger factor.